Reading from the N-terminus, the 507-residue chain is ATP synthase subunit alpha, mitochondrial (507 aa).

171–178 (GDRQTGKT) lines the ATP pocket.

The protein belongs to the ATPase alpha/beta chains family. As to quaternary structure, F-type ATPases have 2 components, CF(1) - the catalytic core - and CF(0) - the membrane proton channel. CF(1) has five subunits: alpha(3), beta(3), gamma(1), delta(1), epsilon(1). CF(0) has three main subunits: a, b and c.

The protein resides in the mitochondrion. Its subcellular location is the mitochondrion inner membrane. Mitochondrial membrane ATP synthase (F(1)F(0) ATP synthase or Complex V) produces ATP from ADP in the presence of a proton gradient across the membrane which is generated by electron transport complexes of the respiratory chain. F-type ATPases consist of two structural domains, F(1) - containing the extramembraneous catalytic core, and F(0) - containing the membrane proton channel, linked together by a central stalk and a peripheral stalk. During catalysis, ATP synthesis in the catalytic domain of F(1) is coupled via a rotary mechanism of the central stalk subunits to proton translocation. Subunits alpha and beta form the catalytic core in F(1). Rotation of the central stalk against the surrounding alpha(3)beta(3) subunits leads to hydrolysis of ATP in three separate catalytic sites on the beta subunits. Subunit alpha does not bear the catalytic high-affinity ATP-binding sites. In Brassica napus (Rape), this protein is ATP synthase subunit alpha, mitochondrial (ATPA).